The chain runs to 147 residues: Fluoride-specific ion channel FluC 1 (147 aa).

A run of 4 helical transmembrane segments spans residues 29–49, 61–81, 90–110, and 118–138; these read YVYI…ISFL, IANL…IAFF, AITT…LELI, and FITL…LCYV. Na(+) contacts are provided by glycine 97 and threonine 100.

The protein belongs to the fluoride channel Fluc/FEX (TC 1.A.43) family.

Its subcellular location is the cell membrane. It catalyses the reaction fluoride(in) = fluoride(out). With respect to regulation, na(+) is not transported, but it plays an essential structural role and its presence is essential for fluoride channel function. Fluoride-specific ion channel. Important for reducing fluoride concentration in the cell, thus reducing its toxicity. This is Fluoride-specific ion channel FluC 1 from Staphylococcus aureus (strain Mu50 / ATCC 700699).